A 138-amino-acid polypeptide reads, in one-letter code: Large ribosomal subunit protein bL19 (138 aa).

The protein belongs to the bacterial ribosomal protein bL19 family.

This protein is located at the 30S-50S ribosomal subunit interface and may play a role in the structure and function of the aminoacyl-tRNA binding site. The chain is Large ribosomal subunit protein bL19 from Rickettsia peacockii (strain Rustic).